The following is a 252-amino-acid chain: Chitooligosaccharide deacetylase (252 aa).

Positions 61 and 125 each coordinate Mg(2+).

It belongs to the YdjC deacetylase family. ChbG subfamily. As to quaternary structure, homodimer. It depends on Mg(2+) as a cofactor.

Its subcellular location is the cytoplasm. It carries out the reaction N,N'-diacetylchitobiose + H2O = N-acetyl-beta-D-glucosaminyl-(1-&gt;4)-D-glucosamine + acetate. The catalysed reaction is diacetylchitobiose-6'-phosphate + H2O = N'-monoacetylchitobiose-6'-phosphate + acetate. The protein operates within glycan degradation; chitin degradation. Its function is as follows. Involved in the degradation of chitin. ChbG is essential for growth on the acetylated chitooligosaccharides chitobiose and chitotriose but is dispensable for growth on cellobiose and chitosan dimer, the deacetylated form of chitobiose. Deacetylation of chitobiose-6-P and chitotriose-6-P is necessary for both the activation of the chb promoter by the regulatory protein ChbR and the hydrolysis of phosphorylated beta-glucosides by the phospho-beta-glucosidase ChbF. Catalyzes the removal of only one acetyl group from chitobiose-6-P to yield monoacetylchitobiose-6-P, the inducer of ChbR and the substrate of ChbF. The polypeptide is Chitooligosaccharide deacetylase (Escherichia fergusonii (strain ATCC 35469 / DSM 13698 / CCUG 18766 / IAM 14443 / JCM 21226 / LMG 7866 / NBRC 102419 / NCTC 12128 / CDC 0568-73)).